Reading from the N-terminus, the 121-residue chain is Basic phospholipase A2 VRV-PL-VIIIa (121 aa).

Disulfide bonds link cysteine 26–cysteine 115, cysteine 28–cysteine 44, cysteine 43–cysteine 95, cysteine 49–cysteine 121, cysteine 50–cysteine 88, cysteine 57–cysteine 81, and cysteine 75–cysteine 86. 3 residues coordinate Ca(2+): tyrosine 27, glycine 29, and glycine 31. Histidine 47 is an active-site residue. Aspartate 48 contacts Ca(2+). The active site involves aspartate 89.

It belongs to the phospholipase A2 family. Group II subfamily. D49 sub-subfamily. Monomer. Ca(2+) is required as a cofactor. In terms of tissue distribution, expressed by the venom gland.

Its subcellular location is the secreted. The enzyme catalyses a 1,2-diacyl-sn-glycero-3-phosphocholine + H2O = a 1-acyl-sn-glycero-3-phosphocholine + a fatty acid + H(+). Its activity is regulated as follows. Oxyphenbutazone (OPB), anisic acid and atropine inhibit the enzymatic activity by binding at the substrate-binding site. P-coumaric acid, resveratrol, spermidine, corticosterone and gramine derivative inhibit the enzymatic activity by binding at the substrate-binding site. Functionally, snake venom phospholipase A2 (PLA2) that shows weak neurotoxicity and medium anticoagulant effects by binding to factor Xa (F10) and inhibiting the prothrombinase activity (IC(50) is 130 nM). It also damages vital organs such as lung, liver and kidney, displays edema-inducing activities when injected into the foot pads of mice and induces necrosis of muscle cells when injected into the thigh muscle. Has a low enzymatic activity. PLA2 catalyzes the calcium-dependent hydrolysis of the 2-acyl groups in 3-sn-phosphoglycerides. This is Basic phospholipase A2 VRV-PL-VIIIa from Daboia russelii (Russel's viper).